Reading from the N-terminus, the 401-residue chain is MSREVFICDAVRTPIGRFGGSLSAVRADDLAAVPLKALVERNPGVDWSALDEVFLGCANQAGEDNRNVARMALLLAGLPESVPGVTLNRLCASGMDAIGTAFRAIACGEMELAIAGGVESMSRAPYVMGKADSAFGRGQKIEDTTIGWRFVNPLMKEQYGIDPMPQTADNVADDYRVSRADQDAFALRSQQRAGRAQEAGFFAEEIVPVTIRGRKGDTLVEHDEHPRPDTTLEALARLKPVNGPEKTVTAGNASGVNDGAAALVLASAEAVEKHGLTPRARVLGMASAGVAPRIMGIGPVPAVRKLLRRLDLAIDAFDVIELNEAFASQGLACLRELGVADDSEKVNPNGGAIALGHPLGMSGARLVLTALHQLEKSGGRRGLATMCVGVGQGLALAIERV.

The Acyl-thioester intermediate role is filled by Cys-91. Residues His-357 and Cys-387 each act as proton acceptor in the active site.

It belongs to the thiolase-like superfamily. Thiolase family.

It catalyses the reaction succinyl-CoA + acetyl-CoA = 3-oxoadipyl-CoA + CoA. The protein operates within aromatic compound metabolism; beta-ketoadipate pathway; acetyl-CoA and succinyl-CoA from 3-oxoadipate: step 2/2. Catalyzes thiolytic cleavage of beta-ketoadipyl-CoA to succinyl-CoA and acetyl-CoA. The polypeptide is Beta-ketoadipyl-CoA thiolase (pcaF) (Pseudomonas aeruginosa (strain ATCC 15692 / DSM 22644 / CIP 104116 / JCM 14847 / LMG 12228 / 1C / PRS 101 / PAO1)).